The following is a 65-amino-acid chain: Large ribosomal subunit protein bL35 (65 aa).

2 stretches are compositionally biased toward basic residues: residues 1-16 (MPKM…RFKK) and 31-45 (HRFH…RQLR). The disordered stretch occupies residues 1 to 47 (MPKMKTHRASAKRFKKTANGGLKSASAYTSHRFHGKTKKQRRQLRGT).

This sequence belongs to the bacterial ribosomal protein bL35 family.

The protein is Large ribosomal subunit protein bL35 of Leuconostoc citreum (strain KM20).